The primary structure comprises 186 residues: UPF0301 protein Neut_0448 (186 aa).

This sequence belongs to the UPF0301 (AlgH) family.

The polypeptide is UPF0301 protein Neut_0448 (Nitrosomonas eutropha (strain DSM 101675 / C91 / Nm57)).